The sequence spans 326 residues: ELMO domain-containing protein 1 (326 aa).

The region spanning 133-306 (QHEEMLLKLW…KFRKRIIKQL (174 aa)) is the ELMO domain.

Functionally, acts as a GTPase-activating protein (GAP) toward guanine nucleotide exchange factors like ARL2, ARL3, ARF1 and ARF6, but not for GTPases outside the Arf family. This Pongo abelii (Sumatran orangutan) protein is ELMO domain-containing protein 1 (ELMOD1).